Consider the following 335-residue polypeptide: Zinc transporter ZIP11 (335 aa).

7 helical membrane-spanning segments follow: residues 12-32 (LLGT…VFIF), 44-64 (LGFA…APAV), 72-92 (GFGA…AAFV), 187-207 (IALL…AVGV), 256-278 (FWYG…FAVV), 283-300 (VLPY…YVVM), and 315-335 (LASW…VGLG).

It belongs to the ZIP transporter (TC 2.A.5) family.

It localises to the cell membrane. It is found in the nucleus. Its subcellular location is the cytoplasm. The protein localises to the golgi apparatus. It catalyses the reaction Zn(2+)(in) = Zn(2+)(out). The catalysed reaction is Cu(2+)(in) = Cu(2+)(out). Its function is as follows. Zinc importer that regulates cytosolic zinc concentrations either via zinc influx from the extracellular compartment or efflux from intracellular organelles such as Golgi apparatus. May transport copper ions as well. The transport mechanism remains to be elucidated. The sequence is that of Zinc transporter ZIP11 (Slc39a11) from Rattus norvegicus (Rat).